The primary structure comprises 526 residues: MHVNTLSVLSLVGLVPLAAARLSGSVGPLTSASAKAATKTCNVLDYGAAADKTTDLGAPLASAFADCKTGGLVYVPPGDYALESWAQLSGGKAWALQIDGTIYRTGTDGGNMIFIEHSSDFELFSSTSSGAMQGLGYEFHKDDNWSGPRLLRLYDVSDFALHDFILVDSPSFHLSLDTCSNGEVYNMAIRGGNHGALDGVDVWSTNIWIHDVEVTNKDECVTVKSPAQNILVENIYCNWSGGCGMGSLGADTNISDITYRNVYTWNSNQMMLIKSNGGSGTVSNVVLENFIGHGNAYSLDIDSAWSSMSTQSGDGVEFSNFTIRNWKGTEANGAERGPVKIICPNGAPCYEMYIEDFAMWTEEGDEQWYTCQSAFGSGFCLQSGSDYSSYEATTSTATSAPSGYSAPTMASDLTRDFGSTVSIPIPTIPTSFYPGATPYSALMGAQSSASANVRAVAFGTSAVVSRAGSSSRPAQTGSFLTKSTTAAAGSIMGPTAAAVQGVCAPPAGQGRGAARYGGHRRHGHRH.

A signal peptide spans methionine 1–alanine 20. A disulfide bond links cysteine 41 and cysteine 67. A glycan (N-linked (GlcNAc...) asparagine) is linked at asparagine 144. Residue aspartate 218 is the Proton donor of the active site. The cysteines at positions 220 and 237 are disulfide-linked. N-linked (GlcNAc...) asparagine glycans are attached at residues asparagine 238 and asparagine 253. Histidine 293 is an active-site residue. Asparagine 320 carries N-linked (GlcNAc...) asparagine glycosylation. 2 disulfide bridges follow: cysteine 343–cysteine 349 and cysteine 371–cysteine 380.

It belongs to the glycosyl hydrolase 28 family.

It localises to the secreted. It carries out the reaction Endohydrolysis of alpha-D-GalA-(1-&gt;2)-alpha-L-Rha glycosidic bond in the rhamnogalacturonan I backbone with initial inversion of anomeric configuration releasing oligosaccharides with beta-D-GalA at the reducing end.. Its function is as follows. Pectinolytic enzymes consist of four classes of enzymes: pectine lyase, polygalacturonase, pectin methylesterase and rhamnogalacturonase. Hydrolyzes alpha-D-galacturonopyranosyl-(1,2)-alpha-L-rhamnopyranosyl linkages in the backbone of the hairy regions of pectins. The sequence is that of Probable rhamnogalacturonase B (rhgB) from Aspergillus terreus (strain NIH 2624 / FGSC A1156).